A 362-amino-acid polypeptide reads, in one-letter code: Probable cinnamyl alcohol dehydrogenase 8D (362 aa).

Zn(2+) is bound at residue Cys-45. Thr-47 provides a ligand contact to NADP(+). 7 residues coordinate Zn(2+): His-67, Glu-68, Cys-98, Cys-101, Cys-104, Cys-112, and Cys-161. Residues Thr-165, 186-191 (GLGGLG), 209-214 (SSSPAK), Thr-249, Gly-273, and 296-298 (NGV) contribute to the NADP(+) site.

The protein belongs to the zinc-containing alcohol dehydrogenase family. As to quaternary structure, homodimer. Zn(2+) serves as cofactor.

It catalyses the reaction (E)-cinnamyl alcohol + NADP(+) = (E)-cinnamaldehyde + NADPH + H(+). The catalysed reaction is (E)-coniferol + NADP(+) = (E)-coniferaldehyde + NADPH + H(+). The enzyme catalyses (E)-sinapyl alcohol + NADP(+) = (E)-sinapaldehyde + NADPH + H(+). It carries out the reaction (E)-4-coumaroyl alcohol + NADP(+) = (E)-4-coumaraldehyde + NADPH + H(+). It catalyses the reaction (E)-caffeyl alcohol + NADP(+) = (E)-caffeyl aldehyde + NADPH + H(+). It functions in the pathway aromatic compound metabolism; phenylpropanoid biosynthesis. Functionally, involved in lignin biosynthesis. Catalyzes the final step specific for the production of lignin monomers. Catalyzes the NADPH-dependent reduction of coniferaldehyde, 5-hydroxyconiferaldehyde, sinapaldehyde, 4-coumaraldehyde and caffeyl aldehyde to their respective alcohols. In Oryza sativa subsp. japonica (Rice), this protein is Probable cinnamyl alcohol dehydrogenase 8D.